A 102-amino-acid polypeptide reads, in one-letter code: 10 kDa heat shock protein, mitochondrial (102 aa).

At alanine 2 the chain carries N-acetylalanine. Lysine 8 bears the N6-acetyllysine mark. Position 28 is an N6-succinyllysine (lysine 28). The residue at position 40 (lysine 40) is an N6-acetyllysine; alternate. An N6-malonyllysine; alternate mark is found at lysine 40, lysine 54, and lysine 56. An N6-succinyllysine; alternate mark is found at lysine 40, lysine 54, lysine 56, lysine 66, and lysine 70. N6-acetyllysine; alternate is present on residues lysine 56, lysine 66, and lysine 70. Residue threonine 79 is modified to Phosphothreonine. Lysine 80 and lysine 86 each carry N6-acetyllysine; alternate. N6-succinyllysine; alternate occurs at positions 80 and 86. At lysine 99 the chain carries N6-acetyllysine.

It belongs to the GroES chaperonin family. Homoheptamer arranged in a ring structure. 2 heptameric Hsp10 rings interact with a Hsp60 tetradecamer in the structure of a back-to-back double heptameric ring to form the symmetrical football complex.

The protein resides in the mitochondrion matrix. Co-chaperonin implicated in mitochondrial protein import and macromolecular assembly. Together with Hsp60, facilitates the correct folding of imported proteins. May also prevent misfolding and promote the refolding and proper assembly of unfolded polypeptides generated under stress conditions in the mitochondrial matrix. The functional units of these chaperonins consist of heptameric rings of the large subunit Hsp60, which function as a back-to-back double ring. In a cyclic reaction, Hsp60 ring complexes bind one unfolded substrate protein per ring, followed by the binding of ATP and association with 2 heptameric rings of the co-chaperonin Hsp10. This leads to sequestration of the substrate protein in the inner cavity of Hsp60 where, for a certain period of time, it can fold undisturbed by other cell components. Synchronous hydrolysis of ATP in all Hsp60 subunits results in the dissociation of the chaperonin rings and the release of ADP and the folded substrate protein. In Bos taurus (Bovine), this protein is 10 kDa heat shock protein, mitochondrial (HSPE1).